The following is a 563-amino-acid chain: 5-aminolevulinate synthase, mitochondrial (563 aa).

The N-terminal 18 residues, 1–18 (MESLVRQSKKLCPYIGRT), are a transit peptide targeting the mitochondrion. Substrate-binding residues include arginine 137, serine 251, and lysine 270. Residues serine 303, histidine 331, and threonine 373 each coordinate pyridoxal 5'-phosphate. Lysine 376 is an active-site residue. An N6-(pyridoxal phosphate)lysine modification is found at lysine 376. Threonine 405 and threonine 406 together coordinate pyridoxal 5'-phosphate. Threonine 491 serves as a coordination point for substrate.

Belongs to the class-II pyridoxal-phosphate-dependent aminotransferase family. In terms of assembly, homodimer. Pyridoxal 5'-phosphate serves as cofactor.

It localises to the mitochondrion matrix. It carries out the reaction succinyl-CoA + glycine + H(+) = 5-aminolevulinate + CO2 + CoA. It participates in porphyrin-containing compound metabolism; protoporphyrin-IX biosynthesis; 5-aminolevulinate from glycine: step 1/1. Its function is as follows. Catalyzes the synthesis of 5-aminolevulinate (ALA) from succinyl-CoA and glycine, the first and rate-limiting step in heme biosynthesis. In Yarrowia lipolytica (strain CLIB 122 / E 150) (Yeast), this protein is 5-aminolevulinate synthase, mitochondrial (HEM1).